Consider the following 321-residue polypeptide: Ribose-phosphate pyrophosphokinase (321 aa).

ATP is bound by residues 44–46 (DGE) and 103–104 (RQ). Mg(2+) is bound by residues His-137 and Asp-179. The active site involves Lys-202. Residues Arg-204, Asp-228, and 232-236 (DTAGT) each bind D-ribose 5-phosphate.

This sequence belongs to the ribose-phosphate pyrophosphokinase family. Class I subfamily. Homohexamer. Requires Mg(2+) as cofactor.

It is found in the cytoplasm. The catalysed reaction is D-ribose 5-phosphate + ATP = 5-phospho-alpha-D-ribose 1-diphosphate + AMP + H(+). It participates in metabolic intermediate biosynthesis; 5-phospho-alpha-D-ribose 1-diphosphate biosynthesis; 5-phospho-alpha-D-ribose 1-diphosphate from D-ribose 5-phosphate (route I): step 1/1. Its function is as follows. Involved in the biosynthesis of the central metabolite phospho-alpha-D-ribosyl-1-pyrophosphate (PRPP) via the transfer of pyrophosphoryl group from ATP to 1-hydroxyl of ribose-5-phosphate (Rib-5-P). This chain is Ribose-phosphate pyrophosphokinase, found in Staphylococcus haemolyticus (strain JCSC1435).